We begin with the raw amino-acid sequence, 513 residues long: OTU domain-containing protein 5-A (513 aa).

Disordered stretches follow at residues 1–75 (MTIL…GGAG) and 99–136 (GPGH…DEYE). Residues 166-289 (FIIKQMKEDG…NIHYNSVVNP (124 aa)) enclose the OTU domain. The cys-loop stretch occupies residues 171–177 (MKEDGAC). Residue aspartate 174 is part of the active site. Cysteine 177 acts as the Nucleophile in catalysis. Positions 226–236 (KRKNNCHGNHI) are variable-loop. The tract at residues 277–282 (YHRNIH) is his-loop. Histidine 282 is an active-site residue. The disordered stretch occupies residues 387–446 (LEEWSGRSPRQRSTAGSPEHPDLHAELCMKPPSPGAPLILGKPPSPCAPGPSNQMSTGAD).

Belongs to the peptidase C85 family.

It carries out the reaction Thiol-dependent hydrolysis of ester, thioester, amide, peptide and isopeptide bonds formed by the C-terminal Gly of ubiquitin (a 76-residue protein attached to proteins as an intracellular targeting signal).. Functionally, deubiquitinating enzyme that may function as negative regulator of the innate immune system. Has peptidase activity towards 'Lys-48'- and 'Lys-63'-linked polyubiquitin chains. Can also cleave 'Lys-11'-linked ubiquitin chains (in vitro). This is OTU domain-containing protein 5-A (otud5-a) from Xenopus laevis (African clawed frog).